A 585-amino-acid polypeptide reads, in one-letter code: Tyramine beta-hydroxylase (585 aa).

The first 21 residues, 1-21 (MKCANAAALLFFVLCDIGVHG), serve as a signal peptide directing secretion. Residues 31–142 (SNVTVKWQTD…GTTQFYIAAS (112 aa)) enclose the DOMON domain. N32 and N71 each carry an N-linked (GlcNAc...) asparagine glycan. Y206 is a catalytic residue. Cystine bridges form between C208-C258 and C247-C270. Positions 240 and 241 each coordinate Cu(2+). The Cu(2+) site is built by H308, H386, and H388. Intrachain disulfides connect C365–C477, C369–C534, and C440–C462. H386 is a catalytic residue. An N-linked (GlcNAc...) asparagine glycan is attached at N449. M461 contributes to the Cu(2+) binding site. N483 carries N-linked (GlcNAc...) asparagine glycosylation.

This sequence belongs to the copper type II ascorbate-dependent monooxygenase family. Cu(2+) serves as cofactor.

It localises to the cytoplasmic vesicle. Its subcellular location is the secretory vesicle. The protein localises to the synaptic vesicle. The enzyme catalyses tyramine + L-ascorbate + O2 = (R)-octopamine + L-dehydroascorbate + H2O. Functionally, catalyzes the hydroxylation of tyramine into octopamine, a neurotransmitter involved in pharyngeal pumping and egg laying. The polypeptide is Tyramine beta-hydroxylase (tbh-1) (Caenorhabditis briggsae).